Consider the following 192-residue polypeptide: MSRYLGPRVRVIRRLGALPALTNKSPKKRTIAPGEHAHKTRKLSEFAVQLQEKQKLQYYYGITNSQLARYFRQARRSKSSTGLALLTMLETRLDHLVYRAGFAPTLPAARQLVNHGHVKVNGKKVTIASWACEVNHVIEVKSSSPPKPPEYLPPYLQLSNGTLTVTQPVQKEWLAFVVNELLVVEYYTRVGA.

One can recognise an S4 RNA-binding domain in the interval 91-155; sequence TRLDHLVYRA…PKPPEYLPPY (65 aa).

Belongs to the universal ribosomal protein uS4 family. Part of the 30S ribosomal subunit. Contacts protein S5. The interaction surface between S4 and S5 is involved in control of translational fidelity.

The protein localises to the plastid. It is found in the chloroplast. Functionally, one of the primary rRNA binding proteins, it binds directly to 16S rRNA where it nucleates assembly of the body of the 30S subunit. With S5 and S12 plays an important role in translational accuracy. The sequence is that of Small ribosomal subunit protein uS4c-2 from Cyanidium caldarium (Red alga).